A 503-amino-acid chain; its full sequence is Probable cytosol aminopeptidase (503 aa).

Residues Lys-268 and Asp-273 each contribute to the Mn(2+) site. Lys-280 is a catalytic residue. Mn(2+) contacts are provided by Asp-291, Asp-350, and Glu-352. The active site involves Arg-354.

Belongs to the peptidase M17 family. The cofactor is Mn(2+).

It is found in the cytoplasm. The catalysed reaction is Release of an N-terminal amino acid, Xaa-|-Yaa-, in which Xaa is preferably Leu, but may be other amino acids including Pro although not Arg or Lys, and Yaa may be Pro. Amino acid amides and methyl esters are also readily hydrolyzed, but rates on arylamides are exceedingly low.. It catalyses the reaction Release of an N-terminal amino acid, preferentially leucine, but not glutamic or aspartic acids.. Presumably involved in the processing and regular turnover of intracellular proteins. Catalyzes the removal of unsubstituted N-terminal amino acids from various peptides. The chain is Probable cytosol aminopeptidase from Methylobacterium radiotolerans (strain ATCC 27329 / DSM 1819 / JCM 2831 / NBRC 15690 / NCIMB 10815 / 0-1).